Here is a 314-residue protein sequence, read N- to C-terminus: tRNA dimethylallyltransferase (314 aa).

9-16 serves as a coordination point for ATP; the sequence is GPTAVGKT. 11–16 contributes to the substrate binding site; the sequence is TAVGKT. The segment at 34–37 is interaction with substrate tRNA; it reads DSMQ.

The protein belongs to the IPP transferase family. Monomer. Mg(2+) serves as cofactor.

The enzyme catalyses adenosine(37) in tRNA + dimethylallyl diphosphate = N(6)-dimethylallyladenosine(37) in tRNA + diphosphate. Catalyzes the transfer of a dimethylallyl group onto the adenine at position 37 in tRNAs that read codons beginning with uridine, leading to the formation of N6-(dimethylallyl)adenosine (i(6)A). The protein is tRNA dimethylallyltransferase of Clostridium tetani (strain Massachusetts / E88).